The following is a 340-amino-acid chain: Major histocompatibility complex class I-related gene protein (340 aa).

The first 22 residues, 1–22 (MGELMAFLLPLIIVLMVKHSNS), serve as a signal peptide directing secretion. An alpha-1 region spans residues 23-109 (RTHSLRYFRL…KRLQRHYNHS (87 aa)). An antigen-binding cleft region spans residues 23 to 201 (RTHSLRYFRL…EYGKDTLQRT (179 aa)). Topologically, residues 23-302 (RTHSLRYFRL…QESEAIPLVM (280 aa)) are extracellular. 8-(9H-purin-6-yl)-2-oxa-8-azabicyclo[3.3.1]nona-3,6-diene-4,6-dicarbaldehyde-binding residues include tyrosine 29 and arginine 31. Arginine 31, serine 46, and lysine 65 together coordinate 5-(2-oxoethylideneamino)-6-(D-ribitylamino)uracil. Residues arginine 31, serine 46, and lysine 65 each contribute to the 5-(2-oxopropylideneamino)-6-(D-ribitylamino)uracil site. Arginine 31, serine 46, and lysine 65 together coordinate 7-hydroxy-6-methyl-8-(1-D-ribityl)lumazine. Lysine 65 and histidine 80 together coordinate 8-(9H-purin-6-yl)-2-oxa-8-azabicyclo[3.3.1]nona-3,6-diene-4,6-dicarbaldehyde. Residue lysine 65 coordinates 2-amino-4-oxopteridine-6-carbaldehyde. Residue lysine 65 coordinates pyridoxal. Residue asparagine 107 is glycosylated (N-linked (GlcNAc...) asparagine). The alpha-2 stretch occupies residues 110 to 201 (GSHTYQRMIG…EYGKDTLQRT (92 aa)). Arginine 116 contributes to the 8-(9H-purin-6-yl)-2-oxa-8-azabicyclo[3.3.1]nona-3,6-diene-4,6-dicarbaldehyde binding site. 3 residues coordinate 5-(2-oxoethylideneamino)-6-(D-ribitylamino)uracil: arginine 116, tyrosine 174, and glutamine 175. Arginine 116, tyrosine 174, and glutamine 175 together coordinate 5-(2-oxopropylideneamino)-6-(D-ribitylamino)uracil. Residues arginine 116, tyrosine 174, and glutamine 175 each contribute to the 7-hydroxy-6-methyl-8-(1-D-ribityl)lumazine site. Intrachain disulfides connect cysteine 120-cysteine 183 and cysteine 222-cysteine 278. The tract at residues 202 to 293 (EPPLVRVNRK…GVHMVLQVPQ (92 aa)) is alpha-3. Residues 203–282 (PPLVRVNRKE…SNLYSCHVEH (80 aa)) enclose the Ig-like C1-type domain. The interval 294–302 (ESEAIPLVM) is connecting peptide. The helical transmembrane segment at 303–323 (KAVSGSIVFVIVLTGVGVLVW) threads the bilayer. Residues 324 to 340 (RRRPREQNGAVYLPTPD) are Cytoplasmic-facing.

Belongs to the MHC class I family. Heterotrimer that consists of MR1, B2M and metabolite antigen. Major classes of metabolite ligands presented by MR1 include riboflavin-related antigens, pyrimidines and ribityl lumazines, nucleobase adducts and folate derivatives. Forms reversible covalent Schiff base complexes with microbial pyrimidine-based metabolite, which serves as a molecular switch triggering complete folding, stable association with B2M and translocation of the ternary complex from endoplasmic reticulum to the plasma membrane. Alternatively, forms non-Schiff base complexes with ribityl lumazines. On antigen-presenting cells, the ternary complex interacts with TCR on MR1-restricted T cells. Interacts with TAPBP and TAPBPL chaperones in the endoplasmic reticulum. TAPBP associated or not with MHC class I peptide loading complex binds ligand-free MR1 or MR1-B2M complex, providing for stable MR1 pools ready for metabolite antigen processing. TAPBPL interacts with MR1 in a ligand-independent way; this interaction may stabilize MR1 pool and facilitate ligand loading and dissociation. Structurally, MR1-B2M heterodimer adopts a topology similar to classical MHC class I molecules, with alpha-1 and alpha-2 domains of MR1 forming the antigen-binding cleft composed of two alpha-helices resting on a floor of 7-stranded anti-parallel beta-pleated sheet. MR1-B2M heterodimer (via alpha-helices) interacts with TCR (via CDR domains). Post-translationally, N-glycosylated.

Its subcellular location is the cell membrane. The protein resides in the endoplasmic reticulum membrane. It is found in the golgi apparatus membrane. It localises to the early endosome membrane. The protein localises to the late endosome membrane. Its function is as follows. Antigen-presenting molecule specialized in displaying microbial pyrimidine-based metabolites to alpha-beta T cell receptors (TCR) on innate-type mucosal-associated invariant T (MAIT) cells. In complex with B2M preferentially presents riboflavin-derived metabolites to semi-invariant TCRs on MAIT cells, guiding immune surveillance of the microbial metabolome at mucosal epithelial barriers. Signature pyrimidine-based microbial antigens are generated via non-enzymatic condensation of metabolite intermediates of the riboflavin pathway with by-products arising from other metabolic pathways such as glycolysis. Typical potent antigenic metabolites are 5-(2-oxoethylideneamino)-6-D-ribitylaminouracil (5-OE-RU) and 5-(2-oxopropylideneamino)-6-D-ribitylaminouracil (5-OP-RU), products of condensation of 5-amino-6-D-ribityaminouracil (5-A-RU) with glyoxal or methylglyoxal by-products, respectively. May present microbial antigens to various MAIT cell subsets, providing for unique recognition of diverse microbes, including pathogens that do not synthesize riboflavin. Upon antigen recognition, elicits rapid innate-type MAIT cell activation to eliminate pathogenic microbes by directly killing infected cells. During T cell development, drives thymic selection and post-thymic terminal differentiation of MAIT cells in a process dependent on commensal microflora. Acts as an immune sensor of cancer cell metabolome. May present a tumor-specific or -associated metabolite essential for cancer cell survival to a pan-cancer TCR on a non-MAIT CD8-positive T cell clone, triggering T cell-mediated killing of a wide range of cancer cell types. May present tumor-enriched pyridoxal and pyridoxal 5'-phosphate antigens, enabling preferential recognition of cancer cells. Presents nucleobase carbonyl adducts generated during oxidative stress. Captures M3Ade, a nucleobase adduct composed of one adenine modified by a malondialdehyde trimer, for recognition by MR1-restricted T cell clones expressing a polyclonal TCR repertoire. This Pongo pygmaeus (Bornean orangutan) protein is Major histocompatibility complex class I-related gene protein.